Reading from the N-terminus, the 333-residue chain is ASDCMFGNGKGYRGKKATTVMGIPCQEWAAQEPHRHSIFTPETNPQAGLEKNYCRNPDGDVNGPWCYTMNQRKLFDYCDVPQCVSTSFDCGKPQVEPKKCPGRVVGGCVANPHSWPWQISLRTRYGKHFCGGTLISPEWVLTAAHCLERSSRPASYKVILGAHKEVNLESDVQEIEVYKLFLEPTRADIALLKLSSPAVITSKVIPACLPPPNYVVADRTLCYITGWGETQGTYGAGLLKEAQLPVIENKVCNRYEYLNGRVKSTELCAGNLAGGTDSCQGDSGGPLVCFEKDKYILQGVTSWGLGCARPNKPGVYVRVSRFVTWIEGIMRNN.

One can recognise a Kringle 5 domain in the interval 4-83; that stretch reads CMFGNGKGYR…LFDYCDVPQC (80 aa). Disulfide bonds link cysteine 4–cysteine 83, cysteine 25–cysteine 66, cysteine 54–cysteine 78, cysteine 90–cysteine 208, cysteine 100–cysteine 108, cysteine 130–cysteine 146, cysteine 222–cysteine 289, cysteine 252–cysteine 268, and cysteine 279–cysteine 307. The region spanning 104–331 is the Peptidase S1 domain; the sequence is VVGGCVANPH…FVTWIEGIMR (228 aa). A Phosphoserine modification is found at serine 120. Residues histidine 145 and aspartate 188 each act as charge relay system in the active site. Serine 283 functions as the Charge relay system in the catalytic mechanism.

The protein belongs to the peptidase S1 family. Plasminogen subfamily. As to quaternary structure, interacts with CSPG4 and AMOT. Interacts (via the Kringle domains) with HRG; the interaction tethers PLG to the cell surface and enhances its activation. Interacts (via Kringle 4 domain) with ADA; the interaction stimulates PLG activation when in complex with DPP4. Angiostatin: Interacts with ATP5F1A; the interaction inhibits most of the angiogenic effects of angiostatin.

It is found in the secreted. The enzyme catalyses Preferential cleavage: Lys-|-Xaa &gt; Arg-|-Xaa, higher selectivity than trypsin. Converts fibrin into soluble products.. With respect to regulation, converted into plasmin by plasminogen activators, both plasminogen and its activator being bound to fibrin. Activated with urokinase and high concentrations of streptokinase. Plasmin dissolves the fibrin of blood clots and acts as a proteolytic factor in a variety of other processes including embryonic development, tissue remodeling, tumor invasion, and inflammation. In ovulation, weakens the walls of the Graafian follicle. It activates the urokinase-type plasminogen activator, collagenases and several complement zymogens, such as C1, C4 and C5. Cleavage of fibronectin and laminin leads to cell detachment and apoptosis. Also cleaves fibrin, thrombospondin and von Willebrand factor. Its role in tissue remodeling and tumor invasion may be modulated by CSPG4. Binds to cells. In Canis lupus familiaris (Dog), this protein is Plasminogen (PLG).